We begin with the raw amino-acid sequence, 490 residues long: Serine hydroxymethyltransferase (490 aa).

(6S)-5,6,7,8-tetrahydrofolate contacts are provided by residues leucine 179 and glycine 183–leucine 185. An N6-(pyridoxal phosphate)lysine modification is found at lysine 291. Residue lysine 362 forms an Isoglutamyl lysine isopeptide (Lys-Gln) (interchain with Q-Cter in protein Pup) linkage.

This sequence belongs to the SHMT family. In terms of assembly, homodimer. The cofactor is pyridoxal 5'-phosphate.

It is found in the cytoplasm. It catalyses the reaction (6R)-5,10-methylene-5,6,7,8-tetrahydrofolate + glycine + H2O = (6S)-5,6,7,8-tetrahydrofolate + L-serine. It participates in one-carbon metabolism; tetrahydrofolate interconversion. It functions in the pathway amino-acid biosynthesis; glycine biosynthesis; glycine from L-serine: step 1/1. Its function is as follows. Catalyzes the reversible interconversion of serine and glycine with tetrahydrofolate (THF) serving as the one-carbon carrier. This reaction serves as the major source of one-carbon groups required for the biosynthesis of purines, thymidylate, methionine, and other important biomolecules. Also exhibits THF-independent aldolase activity toward beta-hydroxyamino acids, producing glycine and aldehydes, via a retro-aldol mechanism. This chain is Serine hydroxymethyltransferase, found in Mycolicibacterium smegmatis (strain ATCC 700084 / mc(2)155) (Mycobacterium smegmatis).